Reading from the N-terminus, the 510-residue chain is Inositol-3-phosphate synthase (510 aa).

Residues Gly70, Gly71, Asn72, Asn73, Asp143, Ile180, Gln190, Arg193, Thr230, Ala231, Asn232, Thr233, Gly281, Ser282, Asp306, Ser309, Asn340, Asn341, Asp342, Lys355, Gly393, Asp394, Asp422, and Ser423 each coordinate NAD(+).

The protein belongs to the myo-inositol 1-phosphate synthase family. The cofactor is NAD(+).

It is found in the cytoplasm. Its subcellular location is the cytosol. The protein localises to the nucleus. The enzyme catalyses D-glucose 6-phosphate = 1D-myo-inositol 3-phosphate. It participates in polyol metabolism; myo-inositol biosynthesis; myo-inositol from D-glucose 6-phosphate: step 1/2. Functionally, key enzyme in myo-inositol biosynthesis pathway that catalyzes the conversion of glucose 6-phosphate to 1-myo-inositol 1-phosphate in a NAD-dependent manner. This chain is Inositol-3-phosphate synthase, found in Nicotiana tabacum (Common tobacco).